The chain runs to 329 residues: Ferredoxin--NADP reductase (329 aa).

Residues Asp-28, Gln-36, Tyr-41, Ala-81, Phe-115, Asp-282, and Thr-323 each coordinate FAD.

It belongs to the ferredoxin--NADP reductase type 2 family. In terms of assembly, homodimer. It depends on FAD as a cofactor.

It catalyses the reaction 2 reduced [2Fe-2S]-[ferredoxin] + NADP(+) + H(+) = 2 oxidized [2Fe-2S]-[ferredoxin] + NADPH. The protein is Ferredoxin--NADP reductase of Anaplasma marginale (strain St. Maries).